A 357-amino-acid chain; its full sequence is Probable leucine aminopeptidase ARB_00576 (357 aa).

Positions 1 to 15 are cleaved as a signal peptide; sequence MKVLAALALSALAMA. The N-linked (GlcNAc...) asparagine glycan is linked to Asn-76. His-167 and Asp-185 together coordinate Zn(2+). The disordered stretch occupies residues 169 to 188; the sequence is DSINGNNPQGEAPGADDNGS. Asn-186 carries an N-linked (GlcNAc...) asparagine glycan. Residues Glu-224 and Asp-251 each contribute to the Zn(2+) site. Residue Asn-269 is glycosylated (N-linked (GlcNAc...) asparagine). Cys-291 and Cys-295 are joined by a disulfide. His-324 contacts Zn(2+).

It belongs to the peptidase M28 family. M28E subfamily. As to quaternary structure, monomer. Requires Zn(2+) as cofactor.

It localises to the secreted. Its function is as follows. Probable extracellular aminopeptidase which contributes to pathogenicity. This Arthroderma benhamiae (strain ATCC MYA-4681 / CBS 112371) (Trichophyton mentagrophytes) protein is Probable leucine aminopeptidase ARB_00576.